The following is a 211-amino-acid chain: Large ribosomal subunit protein uL3 (211 aa).

Position 150 is an N5-methylglutamine (glutamine 150).

Belongs to the universal ribosomal protein uL3 family. As to quaternary structure, part of the 50S ribosomal subunit. Forms a cluster with proteins L14 and L19. Post-translationally, methylated by PrmB.

Functionally, one of the primary rRNA binding proteins, it binds directly near the 3'-end of the 23S rRNA, where it nucleates assembly of the 50S subunit. The protein is Large ribosomal subunit protein uL3 of Pseudomonas fluorescens (strain ATCC BAA-477 / NRRL B-23932 / Pf-5).